The chain runs to 239 residues: MEIFPAIDLKEGRCVRLYQGEFSKETVMNEDPVAQAIIFETFGAKRLHIVDLDGAVAGESLNLSVIERICKAVRIPVQVGGGIRSLVSVEKLFSVGVDKVILGTAALYDKPFLEETVRLYKEKIIVGIDAKNGFVATRGWLDVSEISYIDLAKQMEKIGVQTIVFTDISKDGTLAGPNVEQLELLQKNVATRVIASGGIASIQDVKKLNDMNIYGVIIGKALYEKTIDLEEVLEVTKLC.

Residue Asp-8 is the Proton acceptor of the active site. Residue Asp-129 is the Proton donor of the active site.

It belongs to the HisA/HisF family.

The protein localises to the cytoplasm. It catalyses the reaction 1-(5-phospho-beta-D-ribosyl)-5-[(5-phospho-beta-D-ribosylamino)methylideneamino]imidazole-4-carboxamide = 5-[(5-phospho-1-deoxy-D-ribulos-1-ylimino)methylamino]-1-(5-phospho-beta-D-ribosyl)imidazole-4-carboxamide. The protein operates within amino-acid biosynthesis; L-histidine biosynthesis; L-histidine from 5-phospho-alpha-D-ribose 1-diphosphate: step 4/9. This chain is 1-(5-phosphoribosyl)-5-[(5-phosphoribosylamino)methylideneamino] imidazole-4-carboxamide isomerase, found in Bacillus cereus (strain Q1).